The chain runs to 443 residues: MAASPHTLSSRLLTGCVGGSVWYLERRTIQDSPHKFLHLLRNVNKQWITFQHFSFLKRMYVTQLNRSHNQQVRPKPEPVASPFLEKTSSGQAKAEIYEMRPLSPPSLSLSRKPNEKELIELEPDSVIEDSIDVGKETKEEKRWKEMKLQVYDLPGILARLSKIKLTALVVSTTAAGFALAPGPFDWPCFLLTSVGTGLASCAANSINQFFEVPFDSNMNRTKNRPLVRGQISPLLAVSFATCCAVPGVAILTLGVNPLTGALGLFNIFLYTCCYTPLKRISIANTWVGAVVGAIPPVMGWTAATGSLDAGAFLLGGILYSWQFPHFNALSWGLREDYSRGGYCMMSVTHPGLCRRVALRHCLALLVLSAAAPVLDITTWTFPIMALPINAYISYLGFRFYVDADRRSSRRLFFCSLWHLPLLLLLMLTCKRPSGGGDAGPPPS.

7 helical membrane passes run 174–194, 235–255, 257–277, 280–300, 309–329, 364–384, and 411–431; these read AAGFALAPGPFDWPCFLLTSV, LAVSFATCCAVPGVAILTLGV, PLTGALGLFNIFLYTCCYTPL, ISIANTWVGAVVGAIPPVMGW, AGAFLLGGILYSWQFPHFNAL, LLVLSAAAPVLDITTWTFPIM, and LFFCSLWHLPLLLLLMLTCKR.

The protein belongs to the UbiA prenyltransferase family.

Its subcellular location is the mitochondrion membrane. It carries out the reaction heme b + (2E,6E)-farnesyl diphosphate + H2O = Fe(II)-heme o + diphosphate. In terms of biological role, converts protoheme IX and farnesyl diphosphate to heme O. This chain is Protoheme IX farnesyltransferase, mitochondrial (COX10), found in Homo sapiens (Human).